A 459-amino-acid polypeptide reads, in one-letter code: Vacuolar fusion protein CCZ1 homolog (459 aa).

The protein belongs to the CCZ1 family.

The polypeptide is Vacuolar fusion protein CCZ1 homolog (Nematostella vectensis (Starlet sea anemone)).